Consider the following 493-residue polypeptide: Ribose import ATP-binding protein RbsA (493 aa).

ABC transporter domains lie at 3–239 and 252–493; these read IKMK…VGRE and GRVV…TGGR. ATP is bound at residue 35-42; sequence GENGAGKS.

It belongs to the ABC transporter superfamily. Ribose importer (TC 3.A.1.2.1) family. The complex is composed of an ATP-binding protein (RbsA), two transmembrane proteins (RbsC) and a solute-binding protein (RbsB).

The protein localises to the cell membrane. It carries out the reaction D-ribose(out) + ATP + H2O = D-ribose(in) + ADP + phosphate + H(+). Its function is as follows. Part of the ABC transporter complex RbsABC involved in ribose import. Responsible for energy coupling to the transport system. This Bacillus licheniformis (strain ATCC 14580 / DSM 13 / JCM 2505 / CCUG 7422 / NBRC 12200 / NCIMB 9375 / NCTC 10341 / NRRL NRS-1264 / Gibson 46) protein is Ribose import ATP-binding protein RbsA.